Consider the following 163-residue polypeptide: Phosphopantetheine adenylyltransferase (163 aa).

A substrate-binding site is contributed by Ser-9. Residues 9 to 10 (SF) and His-17 contribute to the ATP site. The substrate site is built by Lys-41, Leu-73, and Lys-87. ATP-binding positions include 88-90 (GLR), Glu-98, and 124-130 (YTYVSST).

The protein belongs to the bacterial CoaD family. As to quaternary structure, homohexamer. It depends on Mg(2+) as a cofactor.

It localises to the cytoplasm. It catalyses the reaction (R)-4'-phosphopantetheine + ATP + H(+) = 3'-dephospho-CoA + diphosphate. It participates in cofactor biosynthesis; coenzyme A biosynthesis; CoA from (R)-pantothenate: step 4/5. Functionally, reversibly transfers an adenylyl group from ATP to 4'-phosphopantetheine, yielding dephospho-CoA (dPCoA) and pyrophosphate. The sequence is that of Phosphopantetheine adenylyltransferase from Fusobacterium nucleatum subsp. nucleatum (strain ATCC 25586 / DSM 15643 / BCRC 10681 / CIP 101130 / JCM 8532 / KCTC 2640 / LMG 13131 / VPI 4355).